A 235-amino-acid polypeptide reads, in one-letter code: Calcium-activated potassium channel subunit beta-2 (235 aa).

Residues Met-1–Asp-45 form a ball and chain region. Residues Met-1–Arg-46 are Cytoplasmic-facing. Residues Ala-47–Ile-67 traverse the membrane as a helical segment. The Extracellular segment spans residues Thr-68–Asn-194. N-linked (GlcNAc...) asparagine glycosylation is found at Asn-88, Asn-96, and Asn-119. A helical membrane pass occupies residues Val-195–Ala-215. Residues Met-216–Arg-235 lie on the Cytoplasmic side of the membrane.

This sequence belongs to the KCNMB (TC 8.A.14.1) family. KCNMB2 subfamily. Interacts with KCNMA1 tetramer. There are probably 4 molecules of KCMNB2 per KCNMA1 tetramer. In terms of processing, N-glycosylated. Highly expressed in brain and heart. Also expressed in lung.

The protein localises to the membrane. Its function is as follows. Regulatory subunit of the calcium activated potassium KCNMA1 (maxiK) channel. Modulates the calcium sensitivity and gating kinetics of KCNMA1, thereby contributing to KCNMA1 channel diversity. Acts as a negative regulator that confers rapid and complete inactivation of KCNMA1 channel complex. This Rattus norvegicus (Rat) protein is Calcium-activated potassium channel subunit beta-2 (Kcnmb2).